Consider the following 252-residue polypeptide: MLKLGKVETYIHEKLEREKLHFVLLDPDDVSPELAGELASMSEEVGVDAIMVGGSTGAEGEVLDSVVRAIKESSNLPVILFPGSHGGISKYADAIFFMSLLNSRNPFFITGAQALGAFQVKRYGIEPIPMAYLIIEPGETVGWVGDAKPIPRHKPKIAAAYALAGQYLGMRLVYLEAGSGAPQPVPPEMIGLVKRVIDVPLIVGGGIRTEEQARAAVKAGADIIVTGTAIEKAGSVEKAREKLEELNRGVKG.

Residues Asp-26 and Ser-55 each contribute to the Mg(2+) site. Residues 174–180 (YLEAGSG), 205–206 (GG), and 227–228 (GT) contribute to the sn-glycerol 1-phosphate site.

Belongs to the GGGP/HepGP synthase family. Group II subfamily. As to quaternary structure, homotetramer. Homohexamer. Mg(2+) serves as cofactor.

The protein localises to the cytoplasm. The catalysed reaction is sn-glycerol 1-phosphate + (2E,6E,10E)-geranylgeranyl diphosphate = sn-3-O-(geranylgeranyl)glycerol 1-phosphate + diphosphate. It functions in the pathway membrane lipid metabolism; glycerophospholipid metabolism. Its function is as follows. Prenyltransferase that catalyzes the transfer of the geranylgeranyl moiety of geranylgeranyl diphosphate (GGPP) to the C3 hydroxyl of sn-glycerol-1-phosphate (G1P). This reaction is the first ether-bond-formation step in the biosynthesis of archaeal membrane lipids. The protein is Geranylgeranylglyceryl phosphate synthase of Thermococcus kodakarensis (strain ATCC BAA-918 / JCM 12380 / KOD1) (Pyrococcus kodakaraensis (strain KOD1)).